The primary structure comprises 159 residues: MTISTLDLILGIIMGIVTVRATMRGFVDEFFSKASILCAAVVAILCHKRLVPLTRVLLGHSILLPCITFLITFMGVYCVMLFLRSRMRTYATRDLISGFNQVFGFFFGIIEGSVLLTVILLLLHVQPFVSVSHMLHESVINTVLSPLVLDGVRYMRLKM.

4 helical membrane passes run 5–27 (TLDL…RGFV), 34–51 (ASIL…KRLV), 61–83 (SILL…MLFL), and 103–125 (FGFF…LLHV).

The protein localises to the cell membrane. This is an uncharacterized protein from Treponema pallidum (strain Nichols).